The primary structure comprises 447 residues: NADP-specific glutamate dehydrogenase (447 aa).

Substrate is bound by residues K92, Q113, and K116. The active-site Proton donor is the K128. G167 contacts substrate. T212 and N243 together coordinate NADP(+). S379 provides a ligand contact to substrate.

This sequence belongs to the Glu/Leu/Phe/Val dehydrogenases family. In terms of assembly, homohexamer.

The catalysed reaction is L-glutamate + NADP(+) + H2O = 2-oxoglutarate + NH4(+) + NADPH + H(+). In terms of biological role, catalyzes the reversible oxidative deamination of glutamate to alpha-ketoglutarate and ammonia. The protein is NADP-specific glutamate dehydrogenase (gdh) of Corynebacterium efficiens (strain DSM 44549 / YS-314 / AJ 12310 / JCM 11189 / NBRC 100395).